We begin with the raw amino-acid sequence, 290 residues long: Glycine--tRNA ligase alpha subunit (290 aa).

This sequence belongs to the class-II aminoacyl-tRNA synthetase family. In terms of assembly, tetramer of two alpha and two beta subunits.

The protein localises to the cytoplasm. It catalyses the reaction tRNA(Gly) + glycine + ATP = glycyl-tRNA(Gly) + AMP + diphosphate. In Maridesulfovibrio salexigens (strain ATCC 14822 / DSM 2638 / NCIMB 8403 / VKM B-1763) (Desulfovibrio salexigens), this protein is Glycine--tRNA ligase alpha subunit.